The following is a 379-amino-acid chain: Elongation factor Ts, mitochondrial (379 aa).

Residues 1 to 45 constitute a mitochondrion transit peptide; that stretch reads MALYRTARRPLQMMLFSRLGNPEQNYSSWARKDASQSAFGMFVRL.

Belongs to the EF-Ts family.

Its subcellular location is the mitochondrion. In terms of biological role, associates with the EF-Tu.GDP complex and induces the exchange of GDP to GTP. It remains bound to the aminoacyl-tRNA.EF-Tu.GTP complex up to the GTP hydrolysis stage on the ribosome. The protein is Elongation factor Ts, mitochondrial of Ricinus communis (Castor bean).